Consider the following 434-residue polypeptide: Trigger factor 2 (434 aa).

One can recognise a PPIase FKBP-type domain in the interval 164–247; that stretch reads GDTVTVDYDC…VKKVERIEIL (84 aa).

Belongs to the FKBP-type PPIase family. Tig subfamily.

Its subcellular location is the cytoplasm. It carries out the reaction [protein]-peptidylproline (omega=180) = [protein]-peptidylproline (omega=0). In terms of biological role, involved in protein export. Acts as a chaperone by maintaining the newly synthesized protein in an open conformation. Functions as a peptidyl-prolyl cis-trans isomerase. This Desulfitobacterium hafniense (strain Y51) protein is Trigger factor 2.